A 968-amino-acid chain; its full sequence is Ribonuclease E (968 aa).

The region spanning 39 to 119 is the S1 motif domain; sequence SNIYKGKITR…GTKGAALTTF (81 aa). Mg(2+)-binding residues include Asp-303 and Asp-346. Residues Cys-404 and Cys-407 each contribute to the Zn(2+) site. Residues 404 to 407 are required for zinc-mediated homotetramerization and catalytic activity; it reads CPRC. The segment at 947 to 968 is disordered; sequence IKNSAGAHSATNFSTSPVKKSE. Polar residues predominate over residues 955-968; that stretch reads SATNFSTSPVKKSE.

The protein belongs to the RNase E/G family. RNase E subfamily. In terms of assembly, component of the RNA degradosome, which is a multiprotein complex involved in RNA processing and mRNA degradation. Within the RNA degradosome, RNase E assembles into a homotetramer formed by a dimer of dimers. It depends on Zn(2+) as a cofactor. Mg(2+) is required as a cofactor.

Its subcellular location is the cytoplasm. The protein localises to the cell inner membrane. The enzyme catalyses Endonucleolytic cleavage of single-stranded RNA in A- and U-rich regions.. In terms of biological role, endoribonuclease that plays a central role in RNA processing and decay. Required for the maturation of 5S and 16S rRNAs and the majority of tRNAs. Also involved in the degradation of most mRNAs. This Buchnera aphidicola subsp. Schizaphis graminum (strain Sg) protein is Ribonuclease E.